Consider the following 556-residue polypeptide: CDP-diacylglycerol--glycerol-3-phosphate 3-phosphatidyltransferase, mitochondrial (556 aa).

The N-terminal 28 residues, 1–28, are a transit peptide targeting the mitochondrion; the sequence is MAAAAAAAAGPVFWRRLLGLLPGRPGLA. Serine 49 is subject to Phosphoserine. ATP is bound at residue 124 to 131; sequence ASLYLGIG. PLD phosphodiesterase domains are found at residues 215 to 241 and 419 to 457; these read TIGL…SDSY and FGAK…LQEY. Catalysis depends on residues histidine 220, lysine 222, and aspartate 227.

This sequence belongs to the CDP-alcohol phosphatidyltransferase class-II family.

Its subcellular location is the mitochondrion. The catalysed reaction is a CDP-1,2-diacyl-sn-glycerol + sn-glycerol 3-phosphate = a 1,2-diacyl-sn-glycero-3-phospho-(1'-sn-glycero-3'-phosphate) + CMP + H(+). The protein operates within phospholipid metabolism; phosphatidylglycerol biosynthesis; phosphatidylglycerol from CDP-diacylglycerol: step 1/2. Its activity is regulated as follows. Activated by calcium and magnesium and inhibited by other bivalent cations. Functions in the biosynthesis of the anionic phospholipids phosphatidylglycerol and cardiolipin. The protein is CDP-diacylglycerol--glycerol-3-phosphate 3-phosphatidyltransferase, mitochondrial (PGS1) of Bos taurus (Bovine).